The sequence spans 236 residues: Leucyl/phenylalanyl-tRNA--protein transferase (236 aa).

Belongs to the L/F-transferase family.

The protein localises to the cytoplasm. The enzyme catalyses N-terminal L-lysyl-[protein] + L-leucyl-tRNA(Leu) = N-terminal L-leucyl-L-lysyl-[protein] + tRNA(Leu) + H(+). The catalysed reaction is N-terminal L-arginyl-[protein] + L-leucyl-tRNA(Leu) = N-terminal L-leucyl-L-arginyl-[protein] + tRNA(Leu) + H(+). It carries out the reaction L-phenylalanyl-tRNA(Phe) + an N-terminal L-alpha-aminoacyl-[protein] = an N-terminal L-phenylalanyl-L-alpha-aminoacyl-[protein] + tRNA(Phe). Its function is as follows. Functions in the N-end rule pathway of protein degradation where it conjugates Leu, Phe and, less efficiently, Met from aminoacyl-tRNAs to the N-termini of proteins containing an N-terminal arginine or lysine. This is Leucyl/phenylalanyl-tRNA--protein transferase from Shewanella sediminis (strain HAW-EB3).